Reading from the N-terminus, the 398-residue chain is Elongation factor Tu (398 aa).

The tr-type G domain maps to 10 to 208; it reads KPHVNVGTIG…ALDDYIPEPE (199 aa). The segment at 19–26 is G1; the sequence is GHVDHGKT. 19–26 is a GTP binding site; it reads GHVDHGKT. Thr26 lines the Mg(2+) pocket. Residues 61-65 form a G2 region; the sequence is GITIA. A G3 region spans residues 82 to 85; the sequence is DCPG. GTP is bound by residues 82–86 and 137–140; these read DCPGH and NKAD. Residues 137–140 are G4; it reads NKAD. The segment at 175-177 is G5; that stretch reads SAL.

The protein belongs to the TRAFAC class translation factor GTPase superfamily. Classic translation factor GTPase family. EF-Tu/EF-1A subfamily. Monomer.

The protein localises to the cytoplasm. The catalysed reaction is GTP + H2O = GDP + phosphate + H(+). Its function is as follows. GTP hydrolase that promotes the GTP-dependent binding of aminoacyl-tRNA to the A-site of ribosomes during protein biosynthesis. The polypeptide is Elongation factor Tu (Marinobacter nauticus (strain ATCC 700491 / DSM 11845 / VT8) (Marinobacter aquaeolei)).